A 401-amino-acid chain; its full sequence is Argininosuccinate synthase (401 aa).

8-16 is an ATP binding site; the sequence is AYSGGLDTS. Y87 contributes to the L-citrulline binding site. G117 lines the ATP pocket. The L-aspartate site is built by T119, N123, and D124. Residue N123 coordinates L-citrulline. L-citrulline-binding residues include R127, S175, E259, and Y271.

Belongs to the argininosuccinate synthase family. Type 1 subfamily. Homotetramer.

It localises to the cytoplasm. It carries out the reaction L-citrulline + L-aspartate + ATP = 2-(N(omega)-L-arginino)succinate + AMP + diphosphate + H(+). It functions in the pathway amino-acid biosynthesis; L-arginine biosynthesis; L-arginine from L-ornithine and carbamoyl phosphate: step 2/3. This is Argininosuccinate synthase from Paenarthrobacter aurescens (strain TC1).